A 414-amino-acid chain; its full sequence is Serine hydroxymethyltransferase (414 aa).

Residues leucine 116 and 120–122 each bind (6S)-5,6,7,8-tetrahydrofolate; that span reads GHL. Lysine 224 is subject to N6-(pyridoxal phosphate)lysine. (6S)-5,6,7,8-tetrahydrofolate-binding positions include glutamate 240 and 348-350; that span reads SPF.

This sequence belongs to the SHMT family. In terms of assembly, homodimer. Pyridoxal 5'-phosphate serves as cofactor.

The protein localises to the cytoplasm. It catalyses the reaction (6R)-5,10-methylene-5,6,7,8-tetrahydrofolate + glycine + H2O = (6S)-5,6,7,8-tetrahydrofolate + L-serine. Its pathway is one-carbon metabolism; tetrahydrofolate interconversion. It functions in the pathway amino-acid biosynthesis; glycine biosynthesis; glycine from L-serine: step 1/1. In terms of biological role, catalyzes the reversible interconversion of serine and glycine with tetrahydrofolate (THF) serving as the one-carbon carrier. This reaction serves as the major source of one-carbon groups required for the biosynthesis of purines, thymidylate, methionine, and other important biomolecules. Also exhibits THF-independent aldolase activity toward beta-hydroxyamino acids, producing glycine and aldehydes, via a retro-aldol mechanism. This Campylobacter concisus (strain 13826) protein is Serine hydroxymethyltransferase.